The following is a 364-amino-acid chain: Leucine-rich repeat-containing protein 19 (364 aa).

The N-terminal stretch at 1-20 (MKVTRFMFWLFSMLLPSVKS) is a signal peptide. The Extracellular portion of the chain corresponds to 21–264 (QASETEVPCN…SEHEPLGKSW (244 aa)). N-linked (GlcNAc...) asparagine glycans are attached at residues Asn30, Asn35, Asn46, and Asn88. LRR repeat units follow at residues 44 to 69 (STNV…VLQM), 70 to 93 (YSLL…SFRN), 94 to 117 (LLNL…SFVG), 118 to 141 (LNEL…TFVP), 143 to 163 (NNLK…APQL), and 164 to 190 (PHLE…NWLN). Residues 174–225 (NPWNCTCGLLELHNWLNTSNVTLENENMTMCSYPDELKHDSIKSAPFTTECH) form the LRRCT domain. Residues Asn177, Asn190, Asn193, Asn200, Asn241, Asn245, and Asn250 are each glycosylated (N-linked (GlcNAc...) asparagine). A helical membrane pass occupies residues 265–285 (AFLVGVVATVLLTSLLIFIAI). Residues 286–364 (KCPVWYNILL…IDINEVHEEK (79 aa)) are Cytoplasmic-facing.

In terms of assembly, interacts with TRAF2 and TRAF6. Strongly expressed in kidney, also expressed in spleen, intestine and colon. Highly expressed in epithelial cells. In kidney, mainly expressed in renal collecting duct epithelial cells.

The protein resides in the membrane. Its activity is regulated as follows. Activated by TLR ligands such as LPS, bacterial DNA and peptidoglycan. Pathogen-recognition receptor which mediates the activation of TRAF2- and TRAF6 NF-kappa-B signaling pathways and induces the expression of pro-inflammatory cytokines. In kidney, prevents infection by uropathogenic bacteria by inducing the production of cytokines, chemokines and antimicrobial substances. In gut, involved in host-microbiota interactions, plays a critical role in promoting the recruitment of immune cells and intestinal inflammation. This chain is Leucine-rich repeat-containing protein 19, found in Mus musculus (Mouse).